A 64-amino-acid polypeptide reads, in one-letter code: Prokaryotic ubiquitin-like protein UBact (64 aa).

Residues methionine 1–glutamate 64 form a disordered region. Over residues arginine 22 to glutamate 64 the composition is skewed to basic and acidic residues. Residue glutamate 64 forms an Isoglutamyl lysine isopeptide (Glu-Lys) (interchain with K-? in acceptor proteins) linkage.

This sequence belongs to the ubiquitin-like protein UBact family.

In terms of biological role, may function as a protein modifier covalently attached to lysine residues of substrate proteins. This may serve to target the modified proteins for degradation by proteasomes. This Leptospirillum ferriphilum (strain ML-04) protein is Prokaryotic ubiquitin-like protein UBact.